We begin with the raw amino-acid sequence, 167 residues long: Early nodulin-like protein 16 (167 aa).

The N-terminal stretch at 1 to 24 is a signal peptide; sequence MARVAVLVAGAVLAFLLAATNVTA. One can recognise a Phytocyanin domain in the interval 25–126; the sequence is KRWTVGDNKF…GMKLAVLVEK (102 aa). 4 N-linked (GlcNAc...) asparagine glycosylation sites follow: asparagine 40, asparagine 71, asparagine 86, and asparagine 99. A disulfide bridge connects residues cysteine 78 and cysteine 114. Asparagine 138 carries the GPI-anchor amidated asparagine lipid modification. Positions 139-167 are cleaved as a propeptide — removed in mature form; that stretch reads SARRTFSVSGFAYQFLIPVAVFAAVGTRY.

It belongs to the early nodulin-like (ENODL) family.

Its subcellular location is the cell membrane. In terms of biological role, may act as a carbohydrate transporter. The polypeptide is Early nodulin-like protein 16 (Arabidopsis thaliana (Mouse-ear cress)).